The following is an 837-amino-acid chain: V-type proton ATPase 116 kDa subunit a 1 (837 aa).

The Cytoplasmic segment spans residues 1-388 (MGELFRSEEM…DAYGIGTYRE (388 aa)). A phosphothreonine mark is found at threonine 250 and threonine 360. Tyrosine 364 bears the Phosphotyrosine mark. Residues 389–407 (INPAPYTIITFPFLFAVMF) form a helical membrane-spanning segment. Over 408–409 (GD) the chain is Vacuolar. Residues 410–426 (FGHGILMTLFAVWMVLR) traverse the membrane as a helical segment. Residues 427 to 441 (ESRILSQKNENEMFS) lie on the Cytoplasmic side of the membrane. Residues 442 to 471 (TVFSGRYIILLMGVFSMYTGLIYNDCFSKS) form a helical membrane-spanning segment. Topologically, residues 472 to 534 (LNIFGSSWSV…ATNKLTFLNS (63 aa)) are vacuolar. A helical membrane pass occupies residues 535-554 (FKMKMSVILGIIHMLFGVSL). The Cytoplasmic segment spans residues 555–572 (SLFNHIYFKKPLNIYFGF). The chain crosses the membrane as a helical span at residues 573 to 593 (IPEIIFMTSLFGYLVILIFYK). Residues 594–638 (WTAYDAHTSENAPSLLIHFINMFLFSYPESGYSMLYSGQKGIQCF) are Vacuolar-facing. A helical membrane pass occupies residues 639-658 (LVVVALLCVPWMLLFKPLVL). Residues 659 to 724 (RRQYLRRKHL…ATMVHQAIHT (66 aa)) are Cytoplasmic-facing. A helical membrane pass occupies residues 725-749 (IEYCLGCISNTASYLRLWALSLAHA). The Vacuolar segment spans residues 750–770 (QLSEVLWTMVIHIGLSVKSLA). Residues 771–809 (GGLVLFFFFTAFATLTVAILLIMEGLSAFLHALRLHWVE) form a helical membrane-spanning segment. Residues 810-837 (FQNKFYSGTGFKFLPFSFEHIREGKFGE) lie on the Cytoplasmic side of the membrane.

The protein belongs to the V-ATPase 116 kDa subunit family. V-ATPase is a heteromultimeric enzyme made up of two complexes: the ATP-hydrolytic V1 complex and the proton translocation V0 complex. The V1 complex consists of three catalytic AB heterodimers that form a heterohexamer, three peripheral stalks each consisting of EG heterodimers, one central rotor including subunits D and F, and the regulatory subunits C and H. The proton translocation complex V0 consists of the proton transport subunit a, a ring of proteolipid subunits c9c'', rotary subunit d, subunits e and f, and the accessory subunits ATP6AP1/Ac45 and ATP6AP2/PRR. Interacts with SPAAR.

The protein resides in the cytoplasmic vesicle. It localises to the clathrin-coated vesicle membrane. Its subcellular location is the secretory vesicle. The protein localises to the synaptic vesicle membrane. It is found in the melanosome. Functionally, subunit of the V0 complex of vacuolar(H+)-ATPase (V-ATPase), a multisubunit enzyme composed of a peripheral complex (V1) that hydrolyzes ATP and a membrane integral complex (V0) that translocates protons. V-ATPase is responsible for the acidification of various organelles, such as lysosomes, endosomes, the trans-Golgi network, and secretory granules, including synaptic vesicles. In certain cell types, can be exported to the plasma membrane, where it is involved in the acidification of the extracellular environment. Required for assembly and activity of the vacuolar ATPase. Through its action on compartment acidification, plays an essential role in neuronal development in terms of integrity and connectivity of neurons. The polypeptide is V-type proton ATPase 116 kDa subunit a 1 (ATP6V0A1) (Pongo abelii (Sumatran orangutan)).